We begin with the raw amino-acid sequence, 614 residues long: UvrABC system protein C (614 aa).

The 78-residue stretch at 12–89 folds into the GIY-YIG domain; the sequence is DKPGVYLFRG…IKEHRPRYNV (78 aa). In terms of domain architecture, UVR spans 198–233; that stretch reads ADLVRGLARKMEAAAANLEFERAAELRDQLRAVEQV.

The protein belongs to the UvrC family. In terms of assembly, interacts with UvrB in an incision complex.

It localises to the cytoplasm. Its function is as follows. The UvrABC repair system catalyzes the recognition and processing of DNA lesions. UvrC both incises the 5' and 3' sides of the lesion. The N-terminal half is responsible for the 3' incision and the C-terminal half is responsible for the 5' incision. The sequence is that of UvrABC system protein C from Desulforudis audaxviator (strain MP104C).